Here is a 283-residue protein sequence, read N- to C-terminus: Pantothenate synthetase (283 aa).

30–37 (MGNLHAGH) contacts ATP. Catalysis depends on His37, which acts as the Proton donor. Gln61 contributes to the (R)-pantoate binding site. Beta-alanine is bound at residue Gln61. 149–152 (GEKD) serves as a coordination point for ATP. (R)-pantoate is bound at residue Gln155. ATP-binding positions include Val178 and 186–189 (LSSR).

Belongs to the pantothenate synthetase family. In terms of assembly, homodimer.

Its subcellular location is the cytoplasm. The enzyme catalyses (R)-pantoate + beta-alanine + ATP = (R)-pantothenate + AMP + diphosphate + H(+). The protein operates within cofactor biosynthesis; (R)-pantothenate biosynthesis; (R)-pantothenate from (R)-pantoate and beta-alanine: step 1/1. Its function is as follows. Catalyzes the condensation of pantoate with beta-alanine in an ATP-dependent reaction via a pantoyl-adenylate intermediate. This is Pantothenate synthetase from Pseudomonas aeruginosa (strain UCBPP-PA14).